Reading from the N-terminus, the 340-residue chain is GTPase Obg (340 aa).

One can recognise an Obg domain in the interval 1–159 (MRFIDKAKIH…RWIELELKLI (159 aa)). The OBG-type G domain occupies 160–331 (ADIGIIGFPN…LIKLIAEVYE (172 aa)). GTP contacts are provided by residues 166-173 (GFPNAGKS), 191-195 (FTTLT), 213-216 (DIPG), 283-286 (NKID), and 312-314 (SLV). The Mg(2+) site is built by Ser173 and Thr193.

The protein belongs to the TRAFAC class OBG-HflX-like GTPase superfamily. OBG GTPase family. Monomer. Requires Mg(2+) as cofactor.

It localises to the cytoplasm. An essential GTPase which binds GTP, GDP and possibly (p)ppGpp with moderate affinity, with high nucleotide exchange rates and a fairly low GTP hydrolysis rate. Plays a role in control of the cell cycle, stress response, ribosome biogenesis and in those bacteria that undergo differentiation, in morphogenesis control. The protein is GTPase Obg of Persephonella marina (strain DSM 14350 / EX-H1).